The sequence spans 712 residues: Cyclolysin secretion/processing ATP-binding protein CyaB (712 aa).

The 122-residue stretch at 7–128 folds into the Peptidase C39 domain; the sequence is QCASVPDSGL…ALWAGELLLC (122 aa). Residues 157–439 enclose the ABC transmembrane type-1 domain; the sequence is IGEVLLISLV…LAQLWNDFQQ (283 aa). The next 6 membrane-spanning stretches (helical) occupy residues 160–180, 194–214, 272–292, 298–318, 367–387, and 390–410; these read VLLI…FFQV, LNVI…LTGI, AVTV…MFFY, LVVL…TPVL, VAAG…VTLI, and LVAL…RMTV. One can recognise an ABC transporter domain in the interval 471–706; that stretch reads IELDRVSFRY…GGLYARLQAL (236 aa). 505–512 lines the ATP pocket; that stretch reads GRSGSGKS.

The protein belongs to the ABC transporter superfamily. Cyclolysin exporter (TC 3.A.1.109.2) family.

The protein resides in the cell membrane. Its function is as follows. Involved in the export of calmodulin-sensitive adenylate cyclase-hemolysin (cyclolysin). The sequence is that of Cyclolysin secretion/processing ATP-binding protein CyaB (cyaB) from Bordetella pertussis (strain ATCC 9797 / DSM 5571 / CCUG 30873 / LMG 14455 / NCTC 10739 / 18323).